The chain runs to 88 residues: Large ribosomal subunit protein bL27 (88 aa).

The protein belongs to the bacterial ribosomal protein bL27 family.

The sequence is that of Large ribosomal subunit protein bL27 from Parabacteroides distasonis (strain ATCC 8503 / DSM 20701 / CIP 104284 / JCM 5825 / NCTC 11152).